Consider the following 227-residue polypeptide: 7-cyano-7-deazaguanine synthase (227 aa).

7–17 (VSGGMDSLVAT) serves as a coordination point for ATP. 4 residues coordinate Zn(2+): cysteine 187, cysteine 195, cysteine 198, and cysteine 201.

This sequence belongs to the QueC family. Zn(2+) is required as a cofactor.

The catalysed reaction is 7-carboxy-7-deazaguanine + NH4(+) + ATP = 7-cyano-7-deazaguanine + ADP + phosphate + H2O + H(+). It functions in the pathway purine metabolism; 7-cyano-7-deazaguanine biosynthesis. Its function is as follows. Catalyzes the ATP-dependent conversion of 7-carboxy-7-deazaguanine (CDG) to 7-cyano-7-deazaguanine (preQ(0)). The sequence is that of 7-cyano-7-deazaguanine synthase from Chlorobaculum parvum (strain DSM 263 / NCIMB 8327) (Chlorobium vibrioforme subsp. thiosulfatophilum).